A 153-amino-acid polypeptide reads, in one-letter code: ORM1-like protein 1 (153 aa).

At 1-27 (MNVGVAHSEVNPNTRVMNSRGIWLTYA) the chain is on the cytoplasmic side. 2 helical membrane passes run 28–46 (LGVGMLHIVLLSIPFFSVP) and 47–64 (VVWTLTNVIHNFGMYVFM). The Cytoplasmic portion of the chain corresponds to 65–105 (HAVKGTPFETPDQGKARLLTHWEQLDYGVQFTSSRKFFTIS). 2 consecutive transmembrane segments (helical) span residues 106-123 (PIILYFLASFYTKYDTAH) and 124-140 (FVINTASLLSVLIPKLP). Residues 141–153 (QLHGVRIFGINKY) are Cytoplasmic-facing.

It belongs to the ORM family. Ceramide-sensitive subunit of the serine palmitoyltransferase (SPT) complex, which is also composed of SPTLC1, SPTLC2/3 and SPTSSA/B.

Its subcellular location is the endoplasmic reticulum membrane. Its function is as follows. Plays an essential role in the homeostatic regulation of sphingolipid de novo biosynthesis by modulating the activity of the serine palmitoyltransferase (SPT) in response to ceramide levels. When complexed to SPT, the binding of ceramides to its N-terminus stabilizes a conformation that block SPT substrate entry, hence preventing SPT catalytic activity. Through this mechanism, maintains ceramide levels at sufficient concentrations for the production of complex sphingolipids, but which prevents the accumulation of ceramides to levels that trigger apoptosis. This chain is ORM1-like protein 1 (ormdl1), found in Danio rerio (Zebrafish).